A 291-amino-acid polypeptide reads, in one-letter code: Nucleotide-binding protein LMHCC_0126 (291 aa).

Residue 13-20 (GMSGAGKT) coordinates ATP. A GTP-binding site is contributed by 63 to 66 (DLRG).

Belongs to the RapZ-like family.

Functionally, displays ATPase and GTPase activities. This chain is Nucleotide-binding protein LMHCC_0126, found in Listeria monocytogenes serotype 4a (strain HCC23).